The sequence spans 538 residues: Putative cysteine ligase BshC (538 aa).

Positions 460 to 485 (KINEQIELLERMLKRNIEKKHEVELN) form a coiled coil.

The protein belongs to the BshC family.

Functionally, involved in bacillithiol (BSH) biosynthesis. May catalyze the last step of the pathway, the addition of cysteine to glucosamine malate (GlcN-Mal) to generate BSH. This is Putative cysteine ligase BshC from Bacillus cereus (strain Q1).